Consider the following 226-residue polypeptide: Probable endolytic peptidoglycan transglycosylase RlpA (226 aa).

A signal peptide spans 1-26 (MERFLGFRTPLGALGVVILLTLILSS). Residue Cys-27 is the site of N-palmitoyl cysteine attachment. The S-diacylglycerol cysteine moiety is linked to residue Cys-27.

It belongs to the RlpA family.

It is found in the cell membrane. Lytic transglycosylase with a strong preference for naked glycan strands that lack stem peptides. The chain is Probable endolytic peptidoglycan transglycosylase RlpA from Aquifex aeolicus (strain VF5).